The following is a 334-amino-acid chain: Phospho-N-acetylmuramoyl-pentapeptide-transferase (334 aa).

Helical transmembrane passes span 5 to 25 (VVWLAAGISFLVTLVLGPVTI), 52 to 72 (PTMGGIMFLIGIAVAGAVLLV), 81 to 101 (GLVVLAVTLGYGLIGFLDDFI), 116 to 136 (KILGQLVFATVLAVVAVFKLG), 148 to 168 (GISFDLGWWPFFFLTLFVLLG), 181 to 200 (GLASGATVFTATAFAILALV), 230 to 250 (VFMGDTGSLALGGALGAGAVV), 256 to 276 (LLVVIGGLYVLETLSVIIQVI), and 309 to 329 (FWLLSFLFSLVGLLGAQDFWL).

The protein belongs to the glycosyltransferase 4 family. MraY subfamily. Mg(2+) serves as cofactor.

The protein resides in the cell membrane. The catalysed reaction is UDP-N-acetyl-alpha-D-muramoyl-L-alanyl-gamma-D-glutamyl-meso-2,6-diaminopimeloyl-D-alanyl-D-alanine + di-trans,octa-cis-undecaprenyl phosphate = di-trans,octa-cis-undecaprenyl diphospho-N-acetyl-alpha-D-muramoyl-L-alanyl-D-glutamyl-meso-2,6-diaminopimeloyl-D-alanyl-D-alanine + UMP. It participates in cell wall biogenesis; peptidoglycan biosynthesis. Functionally, catalyzes the initial step of the lipid cycle reactions in the biosynthesis of the cell wall peptidoglycan: transfers peptidoglycan precursor phospho-MurNAc-pentapeptide from UDP-MurNAc-pentapeptide onto the lipid carrier undecaprenyl phosphate, yielding undecaprenyl-pyrophosphoryl-MurNAc-pentapeptide, known as lipid I. This chain is Phospho-N-acetylmuramoyl-pentapeptide-transferase, found in Desulforamulus reducens (strain ATCC BAA-1160 / DSM 100696 / MI-1) (Desulfotomaculum reducens).